Here is a 284-residue protein sequence, read N- to C-terminus: Bifunctional protein FolD (284 aa).

Residues 165–167 and Ser-190 contribute to the NADP(+) site; that span reads GRS.

The protein belongs to the tetrahydrofolate dehydrogenase/cyclohydrolase family. As to quaternary structure, homodimer.

It carries out the reaction (6R)-5,10-methylene-5,6,7,8-tetrahydrofolate + NADP(+) = (6R)-5,10-methenyltetrahydrofolate + NADPH. It catalyses the reaction (6R)-5,10-methenyltetrahydrofolate + H2O = (6R)-10-formyltetrahydrofolate + H(+). The protein operates within one-carbon metabolism; tetrahydrofolate interconversion. In terms of biological role, catalyzes the oxidation of 5,10-methylenetetrahydrofolate to 5,10-methenyltetrahydrofolate and then the hydrolysis of 5,10-methenyltetrahydrofolate to 10-formyltetrahydrofolate. In Streptococcus agalactiae serotype Ia (strain ATCC 27591 / A909 / CDC SS700), this protein is Bifunctional protein FolD.